Reading from the N-terminus, the 430-residue chain is Lipoyl synthase, mitochondrial (430 aa).

Residues 1–37 constitute a mitochondrion transit peptide; the sequence is MATSAGKLRTLYSAHSSLSSLPPSARPTLQLATLRSY. The segment covering 39–55 has biased composition (polar residues); it reads TTTPHDSPIGNTSNTPP. Positions 39–59 are disordered; the sequence is TTTPHDSPIGNTSNTPPTVKR. 7 residues coordinate [4Fe-4S] cluster: cysteine 141, cysteine 146, cysteine 152, cysteine 172, cysteine 176, cysteine 179, and serine 387. Positions 155-376 constitute a Radical SAM core domain; it reads GSSKSAATAT…KERALEMGFL (222 aa).

It belongs to the radical SAM superfamily. Lipoyl synthase family. The cofactor is [4Fe-4S] cluster.

It localises to the mitochondrion. It catalyses the reaction [[Fe-S] cluster scaffold protein carrying a second [4Fe-4S](2+) cluster] + N(6)-octanoyl-L-lysyl-[protein] + 2 oxidized [2Fe-2S]-[ferredoxin] + 2 S-adenosyl-L-methionine + 4 H(+) = [[Fe-S] cluster scaffold protein] + N(6)-[(R)-dihydrolipoyl]-L-lysyl-[protein] + 4 Fe(3+) + 2 hydrogen sulfide + 2 5'-deoxyadenosine + 2 L-methionine + 2 reduced [2Fe-2S]-[ferredoxin]. Its pathway is protein modification; protein lipoylation via endogenous pathway; protein N(6)-(lipoyl)lysine from octanoyl-[acyl-carrier-protein]: step 2/2. Functionally, catalyzes the radical-mediated insertion of two sulfur atoms into the C-6 and C-8 positions of the octanoyl moiety bound to the lipoyl domains of lipoate-dependent enzymes, thereby converting the octanoylated domains into lipoylated derivatives. This Ajellomyces capsulatus (strain H143) (Darling's disease fungus) protein is Lipoyl synthase, mitochondrial.